We begin with the raw amino-acid sequence, 465 residues long: MTIHIYNTLTRQKEEFTPLEENKVKMYVCGPTVYNYIHIGNARPPMVFDTVRRYLEYKGYDVQYVSNFTDVDDKLIKAANELGEDVPTIADRFVEAYFEDVTALGCKHATVHPRVTENMDIIIEFIQELVNKGYAYESEGDVYFRTKEFEGYGKLSHQPIADLRHGARIEVGEKKQDPLDFALWKAAKEGEIFWESPWGQGRPGWHIECSAMARKYLGDTIDIHAGGQDLAFPHHENEIAQSEALTGKTFARYWMHNGYININNEKMSKSLGNFILVHDIIKQYDPQLIRFFMLSVHYRHPINFSEELLQSTNNGLERIKTAYGNLKHRMESSTDLTDHNEKWLADLEKFQTAFEEAMNDDFNTANAITELYNVANHANQYLLEEHTSTVVIEAYVKQLETLFDILGLELAQEELLDEEIEALIQKRIEARKNRDFALSDQIRDDLKDRNIILEDTAQGTRWKRG.

Zn(2+) is bound at residue Cys29. The 'HIGH' region motif lies at 31 to 41 (PTVYNYIHIGN). 3 residues coordinate Zn(2+): Cys209, His234, and Glu238. Positions 266 to 270 (KMSKS) match the 'KMSKS' region motif. Residue Lys269 coordinates ATP. Ser270 bears the Phosphoserine mark.

Belongs to the class-I aminoacyl-tRNA synthetase family. Monomer. Zn(2+) is required as a cofactor.

It localises to the cytoplasm. It carries out the reaction tRNA(Cys) + L-cysteine + ATP = L-cysteinyl-tRNA(Cys) + AMP + diphosphate. The sequence is that of Cysteine--tRNA ligase from Bacillus anthracis (strain A0248).